Consider the following 107-residue polypeptide: Sperm-specific class P protein 32 (107 aa).

Residues 1-20 (MLTIEPPSATFPASGGSSTH) form a disordered region. The MSP domain occupies 1–107 (MLTIEPPSAT…GDVTILLKTN (107 aa)).

Expressed at higher level in testis.

The protein is Sperm-specific class P protein 32 (ssp-32) of Caenorhabditis elegans.